The sequence spans 859 residues: DNA mismatch repair protein MutS (859 aa).

615-622 contacts ATP; sequence GPNMGGKS.

The protein belongs to the DNA mismatch repair MutS family.

Its function is as follows. This protein is involved in the repair of mismatches in DNA. It is possible that it carries out the mismatch recognition step. This protein has a weak ATPase activity. This Chromohalobacter salexigens (strain ATCC BAA-138 / DSM 3043 / CIP 106854 / NCIMB 13768 / 1H11) protein is DNA mismatch repair protein MutS.